The primary structure comprises 221 residues: Adenylate kinase (221 aa).

10–15 (GAGKGT) provides a ligand contact to ATP. The segment at 30-59 (STGDMLRAAVKAGTPLGLEAKRFMDAGELV) is NMP. Residues Thr-31, Arg-36, 57 to 59 (ELV), 85 to 88 (GFPR), and Gln-92 each bind AMP. Positions 122 to 159 (GRRSHAASGRTYHVKFNPPKVEGVDDMTGEPLIQRDDD) are LID. Residues Arg-123 and 132-133 (TY) each bind ATP. Positions 156 and 167 each coordinate AMP. Residue Gly-207 coordinates ATP.

It belongs to the adenylate kinase family. In terms of assembly, monomer.

Its subcellular location is the cytoplasm. The enzyme catalyses AMP + ATP = 2 ADP. Its pathway is purine metabolism; AMP biosynthesis via salvage pathway; AMP from ADP: step 1/1. Catalyzes the reversible transfer of the terminal phosphate group between ATP and AMP. Plays an important role in cellular energy homeostasis and in adenine nucleotide metabolism. This chain is Adenylate kinase, found in Paraburkholderia phytofirmans (strain DSM 17436 / LMG 22146 / PsJN) (Burkholderia phytofirmans).